We begin with the raw amino-acid sequence, 158 residues long: Ribonuclease H (158 aa).

Residues 3–144 form the RNase H type-1 domain; it reads ELKLIHIFTD…CDQLARAAAE (142 aa). Positions 12, 50, 72, and 136 each coordinate Mg(2+).

It belongs to the RNase H family. Monomer. Requires Mg(2+) as cofactor.

It localises to the cytoplasm. It carries out the reaction Endonucleolytic cleavage to 5'-phosphomonoester.. Functionally, endonuclease that specifically degrades the RNA of RNA-DNA hybrids. The chain is Ribonuclease H from Shewanella sp. (strain MR-7).